The sequence spans 181 residues: TATA-box-binding protein (181 aa).

Repeat copies occupy residues 7–83 (IVNV…MEYL) and 98–173 (VQNM…KNTV).

Belongs to the TBP family.

In terms of biological role, general factor that plays a role in the activation of archaeal genes transcribed by RNA polymerase. Binds specifically to the TATA box promoter element which lies close to the position of transcription initiation. The protein is TATA-box-binding protein of Methanococcus aeolicus (strain ATCC BAA-1280 / DSM 17508 / OCM 812 / Nankai-3).